An 85-amino-acid chain; its full sequence is MKLLLLLIVSASMLIESLVNADGYIKRRDGCKVACLIGNEGCDKECKAYGGSYGYCWTWGLACWCEGLPDDKTWKSETNTCGGKK.

An N-terminal signal peptide occupies residues 1–21; that stretch reads MKLLLLLIVSASMLIESLVNA. In terms of domain architecture, LCN-type CS-alpha/beta spans 22–82; it reads DGYIKRRDGC…TWKSETNTCG (61 aa). 4 cysteine pairs are disulfide-bonded: Cys31–Cys81, Cys35–Cys56, Cys42–Cys63, and Cys46–Cys65. Gly82 is modified (glycine amide).

This sequence belongs to the long (4 C-C) scorpion toxin superfamily. Sodium channel inhibitor family. Beta subfamily. As to expression, expressed by the venom gland.

Its subcellular location is the secreted. Its function is as follows. Depressant insect beta-toxins cause a transient contraction paralysis followed by a slow flaccid paralysis. They bind voltage-independently at site-4 of sodium channels (Nav) and shift the voltage of activation toward more negative potentials thereby affecting sodium channel activation and promoting spontaneous and repetitive firing. This toxin is active only on insects. The chain is Beta-insect depressant toxin LqhIT2 from Leiurus hebraeus (Hebrew deathstalker scorpion).